The chain runs to 149 residues: Putative prefoldin subunit alpha (149 aa).

This sequence belongs to the prefoldin subunit alpha family.

The protein localises to the cytoplasm. Molecular chaperone capable of stabilizing a range of proteins. In Aquifex aeolicus (strain VF5), this protein is Putative prefoldin subunit alpha.